Here is a 527-residue protein sequence, read N- to C-terminus: DNA polymerase epsilon subunit 2 (527 aa).

It belongs to the DNA polymerase epsilon subunit B family. As to quaternary structure, component of the DNA polymerase epsilon complex consisting of four subunits: the catalytic subunit POLE and the accessory subunits POLE2, POLE3 and POLE4.

The protein localises to the nucleus. Functionally, accessory component of the DNA polymerase epsilon complex. Participates in DNA repair and in chromosomal DNA replication. In Homo sapiens (Human), this protein is DNA polymerase epsilon subunit 2.